Consider the following 88-residue polypeptide: uncharacterized protein (88 aa).

Residues 1 to 31 (MIPRDPRSPAPDLSAINQPAGRAERRSGPAT) form a disordered region.

This is an uncharacterized protein from Escherichia coli.